Reading from the N-terminus, the 431-residue chain is GTPase Obg (431 aa).

The region spanning 1–158 (MFVDQVKINV…REIRLELKVL (158 aa)) is the Obg domain. Residues 125 to 145 (GNIHFASPKNPAPEIAENGEP) form a disordered region. The OBG-type G domain maps to 159–335 (ADVGLVGFPS…LLQRTADMLA (177 aa)). GTP is bound by residues 165–172 (GFPSVGKS), 190–194 (FTTLV), 212–215 (DLPG), 282–285 (NKMD), and 316–318 (SAL). Positions 172 and 192 each coordinate Mg(2+). An OCT domain is found at 353–431 (YNFQPEAEFT…IDDFTFEYMA (79 aa)).

It belongs to the TRAFAC class OBG-HflX-like GTPase superfamily. OBG GTPase family. In terms of assembly, monomer. Mg(2+) is required as a cofactor.

Its subcellular location is the cytoplasm. Its function is as follows. An essential GTPase which binds GTP, GDP and possibly (p)ppGpp with moderate affinity, with high nucleotide exchange rates and a fairly low GTP hydrolysis rate. Plays a role in control of the cell cycle, stress response, ribosome biogenesis and in those bacteria that undergo differentiation, in morphogenesis control. This chain is GTPase Obg, found in Levilactobacillus brevis (strain ATCC 367 / BCRC 12310 / CIP 105137 / JCM 1170 / LMG 11437 / NCIMB 947 / NCTC 947) (Lactobacillus brevis).